Here is a 429-residue protein sequence, read N- to C-terminus: Histidinol dehydrogenase (429 aa).

The NAD(+) site is built by Tyr-130, Gln-191, and Asn-214. Substrate is bound by residues Ser-237, Gln-259, and His-262. The Zn(2+) site is built by Gln-259 and His-262. Catalysis depends on proton acceptor residues Glu-327 and His-328. 4 residues coordinate substrate: His-328, Asp-361, Glu-415, and His-420. Asp-361 is a binding site for Zn(2+). His-420 is a binding site for Zn(2+).

It belongs to the histidinol dehydrogenase family. Zn(2+) serves as cofactor.

It catalyses the reaction L-histidinol + 2 NAD(+) + H2O = L-histidine + 2 NADH + 3 H(+). It participates in amino-acid biosynthesis; L-histidine biosynthesis; L-histidine from 5-phospho-alpha-D-ribose 1-diphosphate: step 9/9. Its function is as follows. Catalyzes the sequential NAD-dependent oxidations of L-histidinol to L-histidinaldehyde and then to L-histidine. The chain is Histidinol dehydrogenase from Geobacter sulfurreducens (strain ATCC 51573 / DSM 12127 / PCA).